A 75-amino-acid polypeptide reads, in one-letter code: Small ribosomal subunit protein bS16 (75 aa).

This sequence belongs to the bacterial ribosomal protein bS16 family.

The protein is Small ribosomal subunit protein bS16 of Campylobacter fetus subsp. fetus (strain 82-40).